Here is a 318-residue protein sequence, read N- to C-terminus: UDP-3-O-acylglucosamine N-acyltransferase (318 aa).

The Proton acceptor role is filled by histidine 231.

This sequence belongs to the transferase hexapeptide repeat family. LpxD subfamily. As to quaternary structure, homotrimer.

It carries out the reaction a UDP-3-O-[(3R)-3-hydroxyacyl]-alpha-D-glucosamine + a (3R)-hydroxyacyl-[ACP] = a UDP-2-N,3-O-bis[(3R)-3-hydroxyacyl]-alpha-D-glucosamine + holo-[ACP] + H(+). Its pathway is bacterial outer membrane biogenesis; LPS lipid A biosynthesis. Catalyzes the N-acylation of UDP-3-O-acylglucosamine using 3-hydroxyacyl-ACP as the acyl donor. Is involved in the biosynthesis of lipid A, a phosphorylated glycolipid that anchors the lipopolysaccharide to the outer membrane of the cell. The chain is UDP-3-O-acylglucosamine N-acyltransferase from Campylobacter jejuni subsp. doylei (strain ATCC BAA-1458 / RM4099 / 269.97).